We begin with the raw amino-acid sequence, 206 residues long: Small ribosomal subunit protein uS4 (206 aa).

The segment at 18–46 (NIWGRPKSPVNRREYGPGQHGQRRKQKMS) is disordered. An S4 RNA-binding domain is found at 94-154 (RRLDAVVYRA…EKSRQMAALL (61 aa)).

Belongs to the universal ribosomal protein uS4 family. Part of the 30S ribosomal subunit. Contacts protein S5. The interaction surface between S4 and S5 is involved in control of translational fidelity.

One of the primary rRNA binding proteins, it binds directly to 16S rRNA where it nucleates assembly of the body of the 30S subunit. Its function is as follows. With S5 and S12 plays an important role in translational accuracy. The chain is Small ribosomal subunit protein uS4 from Dinoroseobacter shibae (strain DSM 16493 / NCIMB 14021 / DFL 12).